Reading from the N-terminus, the 529-residue chain is Peptide chain release factor 3 (529 aa).

One can recognise a tr-type G domain in the interval Ala11–Met280. GTP is bound by residues Ser20–Thr27, Asp88–His92, and Asn142–Asp145.

The protein belongs to the TRAFAC class translation factor GTPase superfamily. Classic translation factor GTPase family. PrfC subfamily.

Its subcellular location is the cytoplasm. Its function is as follows. Increases the formation of ribosomal termination complexes and stimulates activities of RF-1 and RF-2. It binds guanine nucleotides and has strong preference for UGA stop codons. It may interact directly with the ribosome. The stimulation of RF-1 and RF-2 is significantly reduced by GTP and GDP, but not by GMP. In Salmonella arizonae (strain ATCC BAA-731 / CDC346-86 / RSK2980), this protein is Peptide chain release factor 3.